Reading from the N-terminus, the 211-residue chain is RILP-like protein 2 (211 aa).

Residues 1-32 are disordered; it reads MEEPPVREEEEEEGEEDEERDEVGPEGALGKS. The span at 8–21 shows a compositional bias: acidic residues; sequence EEEEEEGEEDEERD. The RH1 domain occupies 24-106; it reads GPEGALGKSP…RKEVEGLRRQ (83 aa). Residues 70-164 adopt a coiled-coil conformation; that stretch reads RVLEMLEALV…VQEELQCYKS (95 aa). At Ser-107 the chain carries Phosphoserine. Residues 130–201 form the RH2 domain; the sequence is RPRFTLQELR…NKEEKTIIKK (72 aa). Residues 166–190 are disordered; that stretch reads LIPPREGPGGRREKDAVVTSAKNAG.

The protein belongs to the RILPL family. As to quaternary structure, homodimer. Interacts with RAC1. Interacts (via N-terminus) with MYO5A, the interaction is required for its role in dendrite formation. Interacts with RAB8A; interaction is dependent on the phosphorylation of RAB8A on 'Thr-72'. Interacts with RAB10 and RAB12; interaction is dependent on the phosphorylation of 'Thr-73' on RAB10 and 'Ser-105' on RAB12. As to expression, widely expressed. Expressed at higher level in lung.

The protein localises to the cytoplasm. It is found in the cytosol. The protein resides in the cytoskeleton. Its subcellular location is the microtubule organizing center. It localises to the centrosome. The protein localises to the cell projection. It is found in the cilium. Involved in cell shape and neuronal morphogenesis, positively regulating the establishment and maintenance of dendritic spines. Plays a role in cellular protein transport, including protein transport away from primary cilia. May function via activation of RAC1 and PAK1. The sequence is that of RILP-like protein 2 (RILPL2) from Homo sapiens (Human).